We begin with the raw amino-acid sequence, 264 residues long: Thymidylate synthase 2 (264 aa).

Arg21 is a binding site for dUMP. Position 51 (His51) interacts with (6R)-5,10-methylene-5,6,7,8-tetrahydrofolate. 126-127 lines the dUMP pocket; the sequence is RR. Cys146 acts as the Nucleophile in catalysis. DUMP contacts are provided by residues 166–169, Asn177, and 207–209; these read RSAD and HIY. Asp169 serves as a coordination point for (6R)-5,10-methylene-5,6,7,8-tetrahydrofolate. Residue Ser263 coordinates (6R)-5,10-methylene-5,6,7,8-tetrahydrofolate.

Belongs to the thymidylate synthase family. Bacterial-type ThyA subfamily. As to quaternary structure, homodimer.

It is found in the cytoplasm. The enzyme catalyses dUMP + (6R)-5,10-methylene-5,6,7,8-tetrahydrofolate = 7,8-dihydrofolate + dTMP. Its pathway is pyrimidine metabolism; dTTP biosynthesis. Its function is as follows. Catalyzes the reductive methylation of 2'-deoxyuridine-5'-monophosphate (dUMP) to 2'-deoxythymidine-5'-monophosphate (dTMP) while utilizing 5,10-methylenetetrahydrofolate (mTHF) as the methyl donor and reductant in the reaction, yielding dihydrofolate (DHF) as a by-product. This enzymatic reaction provides an intracellular de novo source of dTMP, an essential precursor for DNA biosynthesis. The chain is Thymidylate synthase 2 from Bacillus subtilis (strain 168).